Consider the following 442-residue polypeptide: Protein PRRC1-A (442 aa).

Residues 1-27 are disordered; the sequence is MMEESGIETTPPSTPPPSTIGTSVPAA.

It belongs to the PRRC1 family.

Its subcellular location is the golgi apparatus. The chain is Protein PRRC1-A (prrc1-a) from Xenopus laevis (African clawed frog).